The chain runs to 91 residues: Signal peptidase complex subunit 1 (91 aa).

Over 1–28 (MEIFNDLSRKLVFPIDYPSQRRVAKLTD) the chain is Cytoplasmic. A helical transmembrane segment spans residues 29–48 (IILGSGTLVSCLLGFYAGSL). Residues 49 to 51 (SLT) lie on the Lumenal side of the membrane. A helical membrane pass occupies residues 52–71 (LYAFAAAYGLALLLVVPAYG). The Cytoplasmic portion of the chain corresponds to 72 to 91 (KYRQQKLAWVGSAAATTKDL).

The protein belongs to the SPCS1 family. In terms of assembly, component of the signal peptidase complex (SPC) composed of a catalytic subunit SEC11 and three accessory subunits SPC1, SPC2 and SPC3. The complex induces a local thinning of the ER membrane which is used to measure the length of the signal peptide (SP) h-region of protein substrates. This ensures the selectivity of the complex towards h-regions shorter than 18-20 amino acids. SPC associates with the translocon complex.

The protein localises to the endoplasmic reticulum membrane. Its function is as follows. Component of the signal peptidase complex (SPC) which catalyzes the cleavage of N-terminal signal sequences from nascent proteins as they are translocated into the lumen of the endoplasmic reticulum. Dispensable for SPC enzymatic activity. This is Signal peptidase complex subunit 1 (SPC1) from Eremothecium gossypii (strain ATCC 10895 / CBS 109.51 / FGSC 9923 / NRRL Y-1056) (Yeast).